A 339-amino-acid chain; its full sequence is MRVYYDRDADLSRILDKKIAIVGYGSQGRAHALNLVDSGVKNVAVALRPGSATAKKVEADGLKVMSVAEASAWADAIMILAPDELQAQIYRDEIAPNIKDGAALLFAHGLNVHFGLIEPKKTVDVLMVAPKGPGHTVRGEYQKGGGVPCLIAVHHDATGGAMDFGLAYASAIGGGRSGVIETNFREECETDLFGEQAVLCGGLVELIRAGFETLVEAGYAPEMAYFECLHEVKLIVDLIYEGGIANMNYSISNTAEYGEYVTGPRIVTSETKAEMKRVLEDIQSGRFVRDFMQENAVGAPSFKATRRRNAEHPIEEVGGRLRAMMPWITKNKLVDTERN.

The region spanning 1–182 (MRVYYDRDAD…GGGRSGVIET (182 aa)) is the KARI N-terminal Rossmann domain. NADP(+)-binding positions include 24-27 (YGSQ), Arg-48, Ser-51, Thr-53, and 83-86 (DELQ). The active site involves His-108. Residue Gly-134 coordinates NADP(+). A KARI C-terminal knotted domain is found at 183 to 328 (NFREECETDL…GRLRAMMPWI (146 aa)). Residues Asp-191, Glu-195, Glu-227, and Glu-231 each contribute to the Mg(2+) site. Ser-252 contacts substrate.

This sequence belongs to the ketol-acid reductoisomerase family. Mg(2+) serves as cofactor.

It catalyses the reaction (2R)-2,3-dihydroxy-3-methylbutanoate + NADP(+) = (2S)-2-acetolactate + NADPH + H(+). The enzyme catalyses (2R,3R)-2,3-dihydroxy-3-methylpentanoate + NADP(+) = (S)-2-ethyl-2-hydroxy-3-oxobutanoate + NADPH + H(+). The protein operates within amino-acid biosynthesis; L-isoleucine biosynthesis; L-isoleucine from 2-oxobutanoate: step 2/4. It functions in the pathway amino-acid biosynthesis; L-valine biosynthesis; L-valine from pyruvate: step 2/4. In terms of biological role, involved in the biosynthesis of branched-chain amino acids (BCAA). Catalyzes an alkyl-migration followed by a ketol-acid reduction of (S)-2-acetolactate (S2AL) to yield (R)-2,3-dihydroxy-isovalerate. In the isomerase reaction, S2AL is rearranged via a Mg-dependent methyl migration to produce 3-hydroxy-3-methyl-2-ketobutyrate (HMKB). In the reductase reaction, this 2-ketoacid undergoes a metal-dependent reduction by NADPH to yield (R)-2,3-dihydroxy-isovalerate. This Phenylobacterium zucineum (strain HLK1) protein is Ketol-acid reductoisomerase (NADP(+)).